Here is a 193-residue protein sequence, read N- to C-terminus: ECF RNA polymerase sigma factor SigK (193 aa).

A sigma-70 factor domain-2 region spans residues 35–101 (LYDRTRSRVY…RRAVDRVRSE (67 aa)). The Polymerase core binding signature appears at 59-62 (ETTQ). The interval 140–187 (MGSLSDLQREAIQLAYYEGLTYVQVSERLSANLATIKSRMRGGIRGLK) is sigma-70 factor domain-4. The H-T-H motif DNA-binding region spans 161-180 (YVQVSERLSANLATIKSRMR).

It belongs to the sigma-70 factor family. ECF subfamily. In terms of assembly, interacts transiently with the RNA polymerase catalytic core formed by RpoA, RpoB, RpoC and RpoZ (2 alpha, 1 beta, 1 beta' and 1 omega subunit) to form the RNA polymerase holoenzyme that can initiate transcription. Interacts (via sigma-70 factor domain 4) with anti-sigma-K factor RskA.

Sigma factors are initiation factors that promote the attachment of RNA polymerase to specific initiation sites and are then released. Extracytoplasmic function (ECF) sigma factors are held in an inactive form by an anti-sigma factor until released by regulated intramembrane proteolysis. This Mycobacterium sp. (strain KMS) protein is ECF RNA polymerase sigma factor SigK (sigK).